The chain runs to 487 residues: Glycogen synthase (487 aa).

K23 contributes to the ADP-alpha-D-glucose binding site.

This sequence belongs to the glycosyltransferase 1 family. Bacterial/plant glycogen synthase subfamily.

The enzyme catalyses [(1-&gt;4)-alpha-D-glucosyl](n) + ADP-alpha-D-glucose = [(1-&gt;4)-alpha-D-glucosyl](n+1) + ADP + H(+). It functions in the pathway glycan biosynthesis; glycogen biosynthesis. In terms of biological role, synthesizes alpha-1,4-glucan chains using ADP-glucose. This Pseudomonas fluorescens (strain Pf0-1) protein is Glycogen synthase.